The chain runs to 104 residues: Interferon alpha-inducible protein 27-like protein 1 (104 aa).

3 helical membrane-spanning segments follow: residues 14-34 (VAAV…LSAM), 59-79 (GGGV…AAGL), and 81-101 (VTSK…LGSP).

Belongs to the IFI6/IFI27 family.

The protein resides in the membrane. In terms of biological role, plays a role in the apoptotic process and has a pro-apoptotic activity. This chain is Interferon alpha-inducible protein 27-like protein 1, found in Homo sapiens (Human).